The primary structure comprises 384 residues: Homoserine O-succinyltransferase (384 aa).

The region spanning Asn-51 to Leu-361 is the AB hydrolase-1 domain. Ser-157 functions as the Nucleophile in the catalytic mechanism. Arg-227 is a substrate binding site. Active-site residues include Asp-324 and His-357. Asp-358 lines the substrate pocket.

Belongs to the AB hydrolase superfamily. MetX family. In terms of assembly, homodimer.

It is found in the cytoplasm. The enzyme catalyses L-homoserine + succinyl-CoA = O-succinyl-L-homoserine + CoA. It functions in the pathway amino-acid biosynthesis; L-methionine biosynthesis via de novo pathway; O-succinyl-L-homoserine from L-homoserine: step 1/1. In terms of biological role, transfers a succinyl group from succinyl-CoA to L-homoserine, forming succinyl-L-homoserine. This is Homoserine O-succinyltransferase from Alkalilimnicola ehrlichii (strain ATCC BAA-1101 / DSM 17681 / MLHE-1).